The chain runs to 83 residues: Large ribosomal subunit protein bL31B (83 aa).

This sequence belongs to the bacterial ribosomal protein bL31 family. Type B subfamily. In terms of assembly, part of the 50S ribosomal subunit.

The chain is Large ribosomal subunit protein bL31B from Lacticaseibacillus casei (strain BL23) (Lactobacillus casei).